A 260-amino-acid chain; its full sequence is Snake venom serine protease salmobin (260 aa).

The signal sequence occupies residues 1–18; it reads MVLIKVLANHLILQLSYA. Residues 19–24 constitute a propeptide that is removed on maturation; that stretch reads QKSSEL. A Peptidase S1 domain is found at 25–251; that stretch reads VIGGDECNIN…YTDWIQSIIA (227 aa). Intrachain disulfides connect C31/C165, C52/C68, C102/C258, C144/C212, C176/C191, and C202/C227. H67 acts as the Charge relay system in catalysis. N-linked (GlcNAc...) asparagine glycosylation occurs at N105. D112 serves as the catalytic Charge relay system. N-linked (GlcNAc...) asparagine glycans are attached at residues N123 and N156. The active-site Charge relay system is the S206.

Belongs to the peptidase S1 family. Snake venom subfamily. As to quaternary structure, monomer. Expressed by the venom gland.

The protein localises to the secreted. Functionally, snake venom serine protease that may act in the hemostasis system of the prey. This is Snake venom serine protease salmobin from Gloydius halys (Chinese water mocassin).